A 120-amino-acid polypeptide reads, in one-letter code: Large ribosomal subunit protein uL18 (120 aa).

Residues 1-22 (MKVDRKTATHRRHQRIRRKIAG) form a disordered region. Residues 8–20 (ATHRRHQRIRRKI) are compositionally biased toward basic residues.

Belongs to the universal ribosomal protein uL18 family. In terms of assembly, part of the 50S ribosomal subunit; part of the 5S rRNA/L5/L18/L25 subcomplex. Contacts the 5S and 23S rRNAs.

Functionally, this is one of the proteins that bind and probably mediate the attachment of the 5S RNA into the large ribosomal subunit, where it forms part of the central protuberance. In Gloeobacter violaceus (strain ATCC 29082 / PCC 7421), this protein is Large ribosomal subunit protein uL18.